The primary structure comprises 761 residues: Zinc finger protein 711 (761 aa).

5 C2H2-type zinc fingers span residues 383-408 (YPCH…HPDH), 414-436 (YQCT…LESH), 476-499 (HKCK…LAVH), 505-527 (HVCV…MRTH), and 533-556 (FHCQ…KSKH). A C2H2-type 6; atypical zinc finger spans residues 562–584 (FKCGHCPQAFADDKELQRHAEIF). Residues Cys-564, Cys-567, and His-580 each coordinate Zn(2+). 6 C2H2-type zinc fingers span residues 590–613 (HQCP…ISVH), 619–641 (HKCD…SETH), 647–670 (HQCR…LSVH), 676–698 (FKCK…MKTH), 704–727 (YQCQ…ISIH), and 733–755 (HRCD…IMRH).

The protein belongs to the krueppel C2H2-type zinc-finger protein family. As to expression, present in ovary and brain but not in other tissues (at protein level).

The protein resides in the nucleus. It localises to the cytoplasm. In terms of biological role, transcription regulator required for brain development. Probably acts as a transcription factor that binds to the promoter of target genes, leading to activate their expression. The protein is Zinc finger protein 711 (znf711) of Danio rerio (Zebrafish).